We begin with the raw amino-acid sequence, 344 residues long: Holliday junction branch migration complex subunit RuvB (344 aa).

Residues 1–183 (MLDERLISSH…FGISCRLDFY (183 aa)) form a large ATPase domain (RuvB-L) region. ATP is bound by residues I22, R23, G64, K67, T68, T69, 130–132 (EDY), R173, Y183, and R220. T68 is a binding site for Mg(2+). The small ATPAse domain (RuvB-S) stretch occupies residues 184-254 (TPLELSEIIL…LAKWALEMLE (71 aa)). A head domain (RuvB-H) region spans residues 257–344 (ECGLDVMDRM…LEGKGLFSDA (88 aa)). DNA contacts are provided by K312 and R317.

Belongs to the RuvB family. Homohexamer. Forms an RuvA(8)-RuvB(12)-Holliday junction (HJ) complex. HJ DNA is sandwiched between 2 RuvA tetramers; dsDNA enters through RuvA and exits via RuvB. An RuvB hexamer assembles on each DNA strand where it exits the tetramer. Each RuvB hexamer is contacted by two RuvA subunits (via domain III) on 2 adjacent RuvB subunits; this complex drives branch migration. In the full resolvosome a probable DNA-RuvA(4)-RuvB(12)-RuvC(2) complex forms which resolves the HJ.

The protein localises to the cytoplasm. It carries out the reaction ATP + H2O = ADP + phosphate + H(+). Its function is as follows. The RuvA-RuvB-RuvC complex processes Holliday junction (HJ) DNA during genetic recombination and DNA repair, while the RuvA-RuvB complex plays an important role in the rescue of blocked DNA replication forks via replication fork reversal (RFR). RuvA specifically binds to HJ cruciform DNA, conferring on it an open structure. The RuvB hexamer acts as an ATP-dependent pump, pulling dsDNA into and through the RuvAB complex. RuvB forms 2 homohexamers on either side of HJ DNA bound by 1 or 2 RuvA tetramers; 4 subunits per hexamer contact DNA at a time. Coordinated motions by a converter formed by DNA-disengaged RuvB subunits stimulates ATP hydrolysis and nucleotide exchange. Immobilization of the converter enables RuvB to convert the ATP-contained energy into a lever motion, pulling 2 nucleotides of DNA out of the RuvA tetramer per ATP hydrolyzed, thus driving DNA branch migration. The RuvB motors rotate together with the DNA substrate, which together with the progressing nucleotide cycle form the mechanistic basis for DNA recombination by continuous HJ branch migration. Branch migration allows RuvC to scan DNA until it finds its consensus sequence, where it cleaves and resolves cruciform DNA. In Syntrophomonas wolfei subsp. wolfei (strain DSM 2245B / Goettingen), this protein is Holliday junction branch migration complex subunit RuvB.